A 281-amino-acid chain; its full sequence is Digeranylgeranylglyceryl phosphate synthase (281 aa).

5 helical membrane passes run 88-108 (IALS…EFLI), 132-152 (ALVS…AGNL), 200-220 (GILV…PVIF), 225-245 (IIYL…ASAI), and 261-281 (LIKV…FRVV).

It belongs to the UbiA prenyltransferase family. DGGGP synthase subfamily. The cofactor is Mg(2+).

It localises to the cell membrane. It catalyses the reaction sn-3-O-(geranylgeranyl)glycerol 1-phosphate + (2E,6E,10E)-geranylgeranyl diphosphate = 2,3-bis-O-(geranylgeranyl)-sn-glycerol 1-phosphate + diphosphate. The protein operates within membrane lipid metabolism; glycerophospholipid metabolism. In terms of biological role, prenyltransferase that catalyzes the transfer of the geranylgeranyl moiety of geranylgeranyl diphosphate (GGPP) to the C2 hydroxyl of (S)-3-O-geranylgeranylglyceryl phosphate (GGGP). This reaction is the second ether-bond-formation step in the biosynthesis of archaeal membrane lipids. The protein is Digeranylgeranylglyceryl phosphate synthase of Korarchaeum cryptofilum (strain OPF8).